Here is a 404-residue protein sequence, read N- to C-terminus: Inosine-5'-monophosphate dehydrogenase (404 aa).

NAD(+) is bound by residues D172 and 222–224 (GIG). K(+) is bound by residues G224 and G226. S227 contacts IMP. C229 provides a ligand contact to K(+). The active-site Thioimidate intermediate is the C229. IMP-binding positions include 262 to 264 (DGG), 285 to 286 (GN), and 309 to 313 (YVGMG). R325 (proton acceptor) is an active-site residue. E340 lines the IMP pocket. Residues E394, S395, and H396 each coordinate K(+).

Belongs to the IMPDH/GMPR family. Homotetramer. It depends on K(+) as a cofactor.

The catalysed reaction is IMP + NAD(+) + H2O = XMP + NADH + H(+). It functions in the pathway purine metabolism; XMP biosynthesis via de novo pathway; XMP from IMP: step 1/1. Mycophenolic acid (MPA) is a non-competitive inhibitor that prevents formation of the closed enzyme conformation by binding to the same site as the amobile flap. In contrast, mizoribine monophosphate (MZP) is a competitive inhibitor that induces the closed conformation. MPA is a potent inhibitor of mammalian IMPDHs but a poor inhibitor of the bacterial enzymes. MZP is a more potent inhibitor of bacterial IMPDH. Its function is as follows. Catalyzes the conversion of inosine 5'-phosphate (IMP) to xanthosine 5'-phosphate (XMP), the first committed and rate-limiting step in the de novo synthesis of guanine nucleotides, and therefore plays an important role in the regulation of cell growth. Essential for mouse infection by tick bite and critical for the survival in environments that appear to lack sufficient amounts of guanine, guanosine, and/or deoxyguanosine to support spirochete growth, such as mammalian host tissues. This chain is Inosine-5'-monophosphate dehydrogenase, found in Borreliella burgdorferi (strain ATCC 35210 / DSM 4680 / CIP 102532 / B31) (Borrelia burgdorferi).